The chain runs to 642 residues: Threonine--tRNA ligase (642 aa).

Residues 1 to 61 (MPVITLPDGS…ETDVDLAIIT (61 aa)) form the TGS domain. A catalytic region spans residues 243 to 534 (DHRKIGKQLD…LIEEYAGKFP (292 aa)). Residues C334, H385, and H511 each coordinate Zn(2+).

It belongs to the class-II aminoacyl-tRNA synthetase family. As to quaternary structure, homodimer. Zn(2+) is required as a cofactor.

The protein resides in the cytoplasm. The enzyme catalyses tRNA(Thr) + L-threonine + ATP = L-threonyl-tRNA(Thr) + AMP + diphosphate + H(+). In terms of biological role, catalyzes the attachment of threonine to tRNA(Thr) in a two-step reaction: L-threonine is first activated by ATP to form Thr-AMP and then transferred to the acceptor end of tRNA(Thr). Also edits incorrectly charged L-seryl-tRNA(Thr). This chain is Threonine--tRNA ligase, found in Shewanella loihica (strain ATCC BAA-1088 / PV-4).